The chain runs to 425 residues: MGPRRLLLVAACFSLCGPLLSARTRARRPESKATNATLDPRSFLLRNPNDKYEPFWEDEEKNESGLTEYRLVSINKSSPLQKQLPAFISEDASGYLTSSWLTLFVPSVYTGVFVVSLPLNIMAIVVFILKMKVKKPAVVYMLHLATADVLFVSVLPFKISYYFSGSDWQFGSELCRFVTAAFYCNMYASILLMTVISIDRFLAVVYPMQSLSWRTLGRASFTCLAIWALAIAGVVPLLLKEQTIQVPGLNITTCHDVLNETLLEGYYAYYFSAFSAVFFFVPLIISTVCYVSIIRCLSSSAVANRSKKSRALFLSAAVFCIFIICFGPTNVLLIAHYSFLSHTSTTEAAYFAYLLCVCVSSISCCIDPLIYYYASSECQRYVYSILCCKESSDPSSYNSSGQLMASKMDTCSSNLNNSIYKKLLT.

The N-terminal stretch at 1–21 (MGPRRLLLVAACFSLCGPLLS) is a signal peptide. A propeptide spanning residues 22 to 41 (ARTRARRPESKATNATLDPR) is cleaved from the precursor. N-linked (GlcNAc...) asparagine glycans are attached at residues Asn35, Asn62, and Asn75. At 42-102 (SFLLRNPNDK…SGYLTSSWLT (61 aa)) the chain is on the extracellular side. A helical membrane pass occupies residues 103-128 (LFVPSVYTGVFVVSLPLNIMAIVVFI). Residues 129–137 (LKMKVKKPA) lie on the Cytoplasmic side of the membrane. A helical transmembrane segment spans residues 138-157 (VVYMLHLATADVLFVSVLPF). The Extracellular portion of the chain corresponds to 158-176 (KISYYFSGSDWQFGSELCR). Cysteines 175 and 254 form a disulfide. Residues 177–198 (FVTAAFYCNMYASILLMTVISI) traverse the membrane as a helical segment. Residues 199–218 (DRFLAVVYPMQSLSWRTLGR) lie on the Cytoplasmic side of the membrane. A helical membrane pass occupies residues 219–239 (ASFTCLAIWALAIAGVVPLLL). Topologically, residues 240–268 (KEQTIQVPGLNITTCHDVLNETLLEGYYA) are extracellular. N-linked (GlcNAc...) asparagine glycosylation is found at Asn250 and Asn259. A helical membrane pass occupies residues 269-288 (YYFSAFSAVFFFVPLIISTV). Topologically, residues 289 to 311 (CYVSIIRCLSSSAVANRSKKSRA) are cytoplasmic. A helical transmembrane segment spans residues 312 to 334 (LFLSAAVFCIFIICFGPTNVLLI). Residues 335–350 (AHYSFLSHTSTTEAAY) are Extracellular-facing. The helical transmembrane segment at 351–374 (FAYLLCVCVSSISCCIDPLIYYYA) threads the bilayer. Residues 375–425 (SSECQRYVYSILCCKESSDPSSYNSSGQLMASKMDTCSSNLNNSIYKKLLT) are Cytoplasmic-facing. Ser418 is subject to Phosphoserine.

This sequence belongs to the G-protein coupled receptor 1 family. In terms of processing, proteolytic cleavage by thrombin generates a new N-terminus that functions as a tethered ligand. Also proteolytically cleaved by cathepsin CTSG. Cleavage at 41-Arg-|-Ser-42 by CTSG results in receptor activation while cleavage at 55-Phe-|-Trp-56 results in inhibition of receptor activation. Phosphorylated in the C-terminal tail; probably mediating desensitization prior to the uncoupling and internalization of the receptor. In terms of tissue distribution, platelets and vascular endothelial cells.

Its subcellular location is the cell membrane. Functionally, high affinity receptor that binds the activated thrombin, leading to calcium release from intracellular stores. The thrombin-activated receptor signaling pathway is mediated through PTX-insensitive G proteins, activation of phospholipase C resulting in the production of 1D-myo-inositol 1,4,5-trisphosphate (InsP3) which binds to InsP3 receptors causing calcium release from the stores. In astrocytes, the calcium released into the cytosol allows the Ca(2+)-dependent release of L-glutamate into the synaptic cleft through BEST1, that targets the neuronal postsynaptic GRIN2A/NMDAR receptor resulting in the synaptic plasticity regulation. May play a role in platelets activation and in vascular development. Mediates up-regulation of pro-inflammatory cytokines, such as MCP-1/CCL2 and IL6, triggered by coagulation factor Xa (F10) in cardiac fibroblasts and umbilical vein endothelial cells. This Homo sapiens (Human) protein is Proteinase-activated receptor 1.